We begin with the raw amino-acid sequence, 570 residues long: Sulfite reductase [NADPH] hemoprotein beta-component (570 aa).

Residues cysteine 434, cysteine 440, cysteine 479, and cysteine 483 each contribute to the [4Fe-4S] cluster site. Residue cysteine 483 coordinates siroheme.

Belongs to the nitrite and sulfite reductase 4Fe-4S domain family. As to quaternary structure, alpha(8)-beta(8). The alpha component is a flavoprotein, the beta component is a hemoprotein. Siroheme is required as a cofactor. The cofactor is [4Fe-4S] cluster.

It carries out the reaction hydrogen sulfide + 3 NADP(+) + 3 H2O = sulfite + 3 NADPH + 4 H(+). It participates in sulfur metabolism; hydrogen sulfide biosynthesis; hydrogen sulfide from sulfite (NADPH route): step 1/1. Component of the sulfite reductase complex that catalyzes the 6-electron reduction of sulfite to sulfide. This is one of several activities required for the biosynthesis of L-cysteine from sulfate. The polypeptide is Sulfite reductase [NADPH] hemoprotein beta-component (Escherichia coli O1:K1 / APEC).